The following is a 469-amino-acid chain: MTAQTLYDKLWNSHVVREEEDGTVLLYIDRHLVHEVTSPQAFEGLKMAGRKLWRIDSVVSTADHNTPTGDWDKGIQDPISKLQVDTLDKNIKEFGALAYFPFMDKGQGIVHVMGPEQGATLPGMTVVCGDSHTSTHGAFGALAHGIGTSEVEHTMATQCITAKKSKSMLISVDGKLKAGVTAKDVALYIIGQIGTAGGTGYAIEFGGEAIRSLSMESRMTLCNMAIEAGARSGMVAVDQTTIDYVKDKPFAPEGEAWDKAVEYWRTLVSDEGAVFDKEYRFNAEDIEPQVTWGTSPEMVLDISSKVPNPAEETDPVKRSGMERALEYMGLEAGTPLNEIPVDIVFIGSCTNSRIEDLREAAAIAKDRKKAANVQRVLIVPGSGLVKEQAEKEGLDKIFIEAGFEWREPGCSMCLAMNADRLTPGQRCASTSNRNFEGRQGNGGRTHLVSPAMAAAAAVTGRFTDIRMMA.

[4Fe-4S] cluster is bound by residues cysteine 349, cysteine 410, and cysteine 413.

The protein belongs to the aconitase/IPM isomerase family. LeuC type 1 subfamily. In terms of assembly, heterodimer of LeuC and LeuD. [4Fe-4S] cluster serves as cofactor.

The enzyme catalyses (2R,3S)-3-isopropylmalate = (2S)-2-isopropylmalate. It functions in the pathway amino-acid biosynthesis; L-leucine biosynthesis; L-leucine from 3-methyl-2-oxobutanoate: step 2/4. Functionally, catalyzes the isomerization between 2-isopropylmalate and 3-isopropylmalate, via the formation of 2-isopropylmaleate. This is 3-isopropylmalate dehydratase large subunit from Neisseria meningitidis serogroup B (strain ATCC BAA-335 / MC58).